Consider the following 347-residue polypeptide: NADH-ubiquinone oxidoreductase chain 2 (347 aa).

11 helical membrane passes run 1-21 (MNPAIFTTIILTMILGTMIVT), 25-45 (HWLTVWIGFEMNMLAIIPILM), 59-79 (YFLTQATASMLLMLAITINLV), 96-116 (ITMTLAMAMKLGLSPFHFWVP), 127-147 (GLILLTWQKLAPMSILYQISP), 149-169 (INLELLLMMAILSIAIGGWGG), 178-198 (IMAYSSIAHMGWMTAIMAYNP), 201-221 (TLLNLXVYILLTTTXFMMLML), 240-260 (LATTILLIMLSLGGLPPLSGF), 274-294 (DSIIMPTIMAMAALLNLYFYM), and 326-346 (ISPLIILSTLXLPLSPMLTLL).

This sequence belongs to the complex I subunit 2 family. Core subunit of respiratory chain NADH dehydrogenase (Complex I) which is composed of 45 different subunits. Interacts with TMEM242.

The protein localises to the mitochondrion inner membrane. The catalysed reaction is a ubiquinone + NADH + 5 H(+)(in) = a ubiquinol + NAD(+) + 4 H(+)(out). Its function is as follows. Core subunit of the mitochondrial membrane respiratory chain NADH dehydrogenase (Complex I) which catalyzes electron transfer from NADH through the respiratory chain, using ubiquinone as an electron acceptor. Essential for the catalytic activity and assembly of complex I. The sequence is that of NADH-ubiquinone oxidoreductase chain 2 from Dobsonia minor (Lesser bare-backed fruit bat).